Consider the following 486-residue polypeptide: UDP-N-acetylmuramate--L-alanine ligase (486 aa).

Position 126–132 (126–132) interacts with ATP; that stretch reads GTHGKTS.

Belongs to the MurCDEF family.

The protein resides in the cytoplasm. The catalysed reaction is UDP-N-acetyl-alpha-D-muramate + L-alanine + ATP = UDP-N-acetyl-alpha-D-muramoyl-L-alanine + ADP + phosphate + H(+). The protein operates within cell wall biogenesis; peptidoglycan biosynthesis. Functionally, cell wall formation. In Buchnera aphidicola subsp. Baizongia pistaciae (strain Bp), this protein is UDP-N-acetylmuramate--L-alanine ligase.